The sequence spans 78 residues: Consomatin Nc1 (78 aa).

The N-terminal stretch at 1 to 22 is a signal peptide; sequence MQTAYWVMVMVMVWITAPLSEG. Residues 23–59 constitute a propeptide that is removed on maturation; sequence GKPNDVIRGLVPDDLTPQLILRSLISRRRSDKDVGKR. Glu61 is modified (4-carboxyglutamate). Cys62 and Cys67 are disulfide-bonded. Trp64 carries the D-tryptophan modification. Position 70 is a 4-hydroxyproline (Pro70). A propeptide spanning residues 71-78 is cleaved from the precursor; sequence LSRRHDLG.

It belongs to the conotoxin C superfamily. Consomatin family. Expressed by the venom duct.

It is found in the secreted. Functionally, moderately activates human somatostatin receptors (SSTR) with a preferential activation of SSTR1 and SSTR4. In vivo, does not cause behavioral changes in mice within a few minutes of intracranial injection, but causes a progressive loss of movement thereafter. Four to five hours after injection, mice recover, even with the highest dose tested. Shows antinociception and antihyperalgesia activities in two mouse models of acute pain, most probably by acting outside the central nervous system. The chain is Consomatin Nc1 from Conus neocostatus (Cone snail).